We begin with the raw amino-acid sequence, 1228 residues long: Clustered mitochondria protein homolog (1228 aa).

Residues proline 298–alanine 557 form the Clu domain. One copy of the TPR 1 repeat lies at cysteine 486–glutamate 519. Residues leucine 671 to glutamate 702 are a coiled coil. TPR repeat units lie at residues alanine 982 to valine 1015 and alanine 1108 to glutamate 1141.

This sequence belongs to the CLU family. In terms of assembly, may associate with the eukaryotic translation initiation factor 3 (eIF-3) complex.

It localises to the cytoplasm. MRNA-binding protein involved in proper cytoplasmic distribution of mitochondria. The protein is Clustered mitochondria protein homolog of Eremothecium gossypii (strain ATCC 10895 / CBS 109.51 / FGSC 9923 / NRRL Y-1056) (Yeast).